We begin with the raw amino-acid sequence, 110 residues long: UPF0060 membrane protein Mmwyl1_1139 (110 aa).

Transmembrane regions (helical) follow at residues 7-27, 33-53, 63-83, and 87-107; these read ISLFMLTALAEIIGCYLPYLW, TIWLLVPAALSLAVFTWLLTL, AAYGGVYIFMAVLWLWIVDGI, and TWDMIGSAVALLGMAIIMFAP.

This sequence belongs to the UPF0060 family.

The protein resides in the cell inner membrane. This Marinomonas sp. (strain MWYL1) protein is UPF0060 membrane protein Mmwyl1_1139.